The following is a 194-amino-acid chain: Imidazoleglycerol-phosphate dehydratase (194 aa).

This sequence belongs to the imidazoleglycerol-phosphate dehydratase family.

The protein localises to the cytoplasm. It carries out the reaction D-erythro-1-(imidazol-4-yl)glycerol 3-phosphate = 3-(imidazol-4-yl)-2-oxopropyl phosphate + H2O. Its pathway is amino-acid biosynthesis; L-histidine biosynthesis; L-histidine from 5-phospho-alpha-D-ribose 1-diphosphate: step 6/9. This is Imidazoleglycerol-phosphate dehydratase from Bacillus velezensis (strain DSM 23117 / BGSC 10A6 / LMG 26770 / FZB42) (Bacillus amyloliquefaciens subsp. plantarum).